Here is a 161-residue protein sequence, read N- to C-terminus: Cyclic pyranopterin monophosphate synthase (161 aa).

Substrate contacts are provided by residues 75–77 and 115–116; these read MCH and ME. Asp130 is a catalytic residue.

This sequence belongs to the MoaC family. As to quaternary structure, homohexamer; trimer of dimers.

The catalysed reaction is (8S)-3',8-cyclo-7,8-dihydroguanosine 5'-triphosphate = cyclic pyranopterin phosphate + diphosphate. It functions in the pathway cofactor biosynthesis; molybdopterin biosynthesis. Its function is as follows. Catalyzes the conversion of (8S)-3',8-cyclo-7,8-dihydroguanosine 5'-triphosphate to cyclic pyranopterin monophosphate (cPMP). The protein is Cyclic pyranopterin monophosphate synthase of Bacillus cereus (strain G9842).